The following is a 290-amino-acid chain: Tubulin beta-4B chain (290 aa).

Residues 1–4 (MREI) carry the MREI motif motif. Residue glutamine 11 participates in GTP binding. Threonine 55 carries the post-translational modification Phosphothreonine. At lysine 58 the chain carries N6-acetyllysine. Glutamate 69, serine 138, glycine 142, threonine 143, glycine 144, and asparagine 172 together coordinate GTP. Glutamate 69 contributes to the Mg(2+) binding site.

Belongs to the tubulin family. Dimer of alpha and beta chains. A typical microtubule is a hollow water-filled tube with an outer diameter of 25 nm and an inner diameter of 15 nM. Alpha-beta heterodimers associate head-to-tail to form protofilaments running lengthwise along the microtubule wall with the beta-tubulin subunit facing the microtubule plus end conferring a structural polarity. Microtubules usually have 13 protofilaments but different protofilament numbers can be found in some organisms and specialized cells. Component of sperm flagellar doublet microtubules. It depends on Mg(2+) as a cofactor. Post-translationally, some glutamate residues at the C-terminus are polyglycylated, resulting in polyglycine chains on the gamma-carboxyl group. Glycylation is mainly limited to tubulin incorporated into axonemes (cilia and flagella) whereas glutamylation is prevalent in neuronal cells, centrioles, axonemes, and the mitotic spindle. Both modifications can coexist on the same protein on adjacent residues, and lowering polyglycylation levels increases polyglutamylation, and reciprocally. Cilia and flagella glycylation is required for their stability and maintenance. Flagella glycylation controls sperm motility. In terms of processing, some glutamate residues at the C-terminus are polyglutamylated, resulting in polyglutamate chains on the gamma-carboxyl group. Polyglutamylation plays a key role in microtubule severing by spastin (SPAST). SPAST preferentially recognizes and acts on microtubules decorated with short polyglutamate tails: severing activity by SPAST increases as the number of glutamates per tubulin rises from one to eight, but decreases beyond this glutamylation threshold. Glutamylation is also involved in cilia motility.

The protein localises to the cytoplasm. It localises to the cytoskeleton. The protein resides in the flagellum axoneme. Tubulin is the major constituent of microtubules, a cylinder consisting of laterally associated linear protofilaments composed of alpha- and beta-tubulin heterodimers. Microtubules grow by the addition of GTP-tubulin dimers to the microtubule end, where a stabilizing cap forms. Below the cap, tubulin dimers are in GDP-bound state, owing to GTPase activity of alpha-tubulin. In Mesocricetus auratus (Golden hamster), this protein is Tubulin beta-4B chain (TUBB4B).